Consider the following 494-residue polypeptide: Glycosyl hydrolase family 109 protein (494 aa).

Positions 1–32 (MNDDARPAPEPQDIPPHSGAADEVNRQDPSRR) are disordered. Residues 1–58 (MNDDARPAPEPQDIPPHSGAADEVNRQDPSRRSVLWTTAGVAGAGLGLGALGAGTASA) constitute a signal peptide (tat-type signal). NAD(+)-binding positions include 104–105 (NR), D126, 175–178 (WELH), 195–196 (EC), and N224. Substrate contacts are provided by residues Y253, R272, 284–287 (YPNH), and Y366. Y284 contacts NAD(+).

Belongs to the Gfo/Idh/MocA family. Glycosyl hydrolase 109 subfamily. The cofactor is NAD(+). Post-translationally, predicted to be exported by the Tat system. The position of the signal peptide cleavage has not been experimentally proven.

Glycosidase. The polypeptide is Glycosyl hydrolase family 109 protein (Streptomyces filamentosus (Streptomyces roseosporus)).